We begin with the raw amino-acid sequence, 993 residues long: Importin subunit beta-5 (993 aa).

The Importin N-terminal domain maps to 24–100 (AELGLRDLEK…RETLLHLLVS (77 aa)).

It is found in the nucleus. Functionally, required for nuclear protein import and mediates docking of import substrate to distinct nucleoporins. Serves a receptor for nuclear localization signals. Mediates the nuclear import of TATA-binding protein (TBP) and of histones H2A and H2B. This Schizosaccharomyces pombe (strain 972 / ATCC 24843) (Fission yeast) protein is Importin subunit beta-5 (kap114).